A 238-amino-acid chain; its full sequence is Probable transcriptional regulatory protein VV2_1184 (238 aa).

It belongs to the TACO1 family.

The protein localises to the cytoplasm. The chain is Probable transcriptional regulatory protein VV2_1184 from Vibrio vulnificus (strain CMCP6).